Consider the following 349-residue polypeptide: Holliday junction branch migration complex subunit RuvB (349 aa).

Over residues Met-1–Glu-15 the composition is skewed to basic and acidic residues. The tract at residues Met-1–Glu-25 is disordered. A large ATPase domain (RuvB-L) region spans residues Met-1 to Tyr-183. ATP is bound by residues Leu-22, Arg-23, Gly-64, Lys-67, Thr-68, Thr-69, Glu-130–Phe-132, Arg-173, Tyr-183, and Arg-220. Residue Thr-68 participates in Mg(2+) binding. Residues Thr-184–Glu-254 form a small ATPAse domain (RuvB-S) region. The head domain (RuvB-H) stretch occupies residues Glu-257–Pro-349. Residues Arg-293, Arg-312, and Arg-317 each contribute to the DNA site.

This sequence belongs to the RuvB family. Homohexamer. Forms an RuvA(8)-RuvB(12)-Holliday junction (HJ) complex. HJ DNA is sandwiched between 2 RuvA tetramers; dsDNA enters through RuvA and exits via RuvB. An RuvB hexamer assembles on each DNA strand where it exits the tetramer. Each RuvB hexamer is contacted by two RuvA subunits (via domain III) on 2 adjacent RuvB subunits; this complex drives branch migration. In the full resolvosome a probable DNA-RuvA(4)-RuvB(12)-RuvC(2) complex forms which resolves the HJ.

It localises to the cytoplasm. It catalyses the reaction ATP + H2O = ADP + phosphate + H(+). Functionally, the RuvA-RuvB-RuvC complex processes Holliday junction (HJ) DNA during genetic recombination and DNA repair, while the RuvA-RuvB complex plays an important role in the rescue of blocked DNA replication forks via replication fork reversal (RFR). RuvA specifically binds to HJ cruciform DNA, conferring on it an open structure. The RuvB hexamer acts as an ATP-dependent pump, pulling dsDNA into and through the RuvAB complex. RuvB forms 2 homohexamers on either side of HJ DNA bound by 1 or 2 RuvA tetramers; 4 subunits per hexamer contact DNA at a time. Coordinated motions by a converter formed by DNA-disengaged RuvB subunits stimulates ATP hydrolysis and nucleotide exchange. Immobilization of the converter enables RuvB to convert the ATP-contained energy into a lever motion, pulling 2 nucleotides of DNA out of the RuvA tetramer per ATP hydrolyzed, thus driving DNA branch migration. The RuvB motors rotate together with the DNA substrate, which together with the progressing nucleotide cycle form the mechanistic basis for DNA recombination by continuous HJ branch migration. Branch migration allows RuvC to scan DNA until it finds its consensus sequence, where it cleaves and resolves cruciform DNA. This Gluconobacter oxydans (strain 621H) (Gluconobacter suboxydans) protein is Holliday junction branch migration complex subunit RuvB.